Here is a 198-residue protein sequence, read N- to C-terminus: DnaJ homolog subfamily C member 12 (198 aa).

Met-1 carries the N-acetylmethionine modification. In terms of domain architecture, J spans Asp-14–Arg-79. Residues Met-112–Pro-167 are disordered. The span at Pro-120–Glu-156 shows a compositional bias: basic and acidic residues. Residues Ser-160, Ser-166, and Ser-182 each carry the phosphoserine modification.

Interacts with HSPA8. Interacts with TPH1. Interacts with TPH2.

The protein localises to the cytoplasm. In terms of biological role, probable co-chaperone that participates in the proper folding of biopterin-dependent aromatic amino acid hydroxylases, which include phenylalanine-4-hydroxylase (PAH), tyrosine 3-monooxygenase (TH) and peripheral and neuronal tryptophan hydroxylases (TPH1 and TPH2). The chain is DnaJ homolog subfamily C member 12 (DNAJC12) from Bos taurus (Bovine).